Reading from the N-terminus, the 313-residue chain is HPr kinase/phosphorylase (313 aa).

Catalysis depends on residues H141 and K162. 156 to 163 (GKSGIGKS) contributes to the ATP binding site. A Mg(2+)-binding site is contributed by S163. D180 serves as the catalytic Proton acceptor; for phosphorylation activity. Proton donor; for dephosphorylation activity. Positions 203 to 212 (IEIRGIGIFD) are important for the catalytic mechanism of both phosphorylation and dephosphorylation. E204 serves as a coordination point for Mg(2+). R247 is an active-site residue. The important for the catalytic mechanism of dephosphorylation stretch occupies residues 268-273 (PVSAGR).

It belongs to the HPrK/P family. In terms of assembly, homohexamer. Mg(2+) is required as a cofactor.

The enzyme catalyses [HPr protein]-L-serine + ATP = [HPr protein]-O-phospho-L-serine + ADP + H(+). The catalysed reaction is [HPr protein]-O-phospho-L-serine + phosphate + H(+) = [HPr protein]-L-serine + diphosphate. Catalyzes the ATP- as well as the pyrophosphate-dependent phosphorylation of a specific serine residue in HPr, a phosphocarrier protein of the phosphoenolpyruvate-dependent sugar phosphotransferase system (PTS). HprK/P also catalyzes the pyrophosphate-producing, inorganic phosphate-dependent dephosphorylation (phosphorolysis) of seryl-phosphorylated HPr (P-Ser-HPr). The two antagonistic activities of HprK/P are regulated by several intracellular metabolites, which change their concentration in response to the absence or presence of rapidly metabolisable carbon sources (glucose, fructose, etc.) in the growth medium. Therefore, by controlling the phosphorylation state of HPr, HPrK/P is a sensor enzyme that plays a major role in the regulation of carbon metabolism and sugar transport: it mediates carbon catabolite repression (CCR), and regulates PTS-catalyzed carbohydrate uptake and inducer exclusion. This Mycoplasma mycoides subsp. mycoides SC (strain CCUG 32753 / NCTC 10114 / PG1) protein is HPr kinase/phosphorylase.